Reading from the N-terminus, the 620-residue chain is 1-deoxy-D-xylulose-5-phosphate synthase (620 aa).

Thiamine diphosphate contacts are provided by residues His-80 and 121-123 (GHS). Mg(2+) is bound at residue Asp-152. Thiamine diphosphate is bound by residues 153–154 (GA), Asn-181, Tyr-288, and Glu-370. Asn-181 is a Mg(2+) binding site.

Belongs to the transketolase family. DXPS subfamily. As to quaternary structure, homodimer. Requires Mg(2+) as cofactor. It depends on thiamine diphosphate as a cofactor.

The enzyme catalyses D-glyceraldehyde 3-phosphate + pyruvate + H(+) = 1-deoxy-D-xylulose 5-phosphate + CO2. It functions in the pathway metabolic intermediate biosynthesis; 1-deoxy-D-xylulose 5-phosphate biosynthesis; 1-deoxy-D-xylulose 5-phosphate from D-glyceraldehyde 3-phosphate and pyruvate: step 1/1. Its function is as follows. Catalyzes the acyloin condensation reaction between C atoms 2 and 3 of pyruvate and glyceraldehyde 3-phosphate to yield 1-deoxy-D-xylulose-5-phosphate (DXP). The sequence is that of 1-deoxy-D-xylulose-5-phosphate synthase from Escherichia coli O7:K1 (strain IAI39 / ExPEC).